Reading from the N-terminus, the 396-residue chain is Tryptophan synthase beta chain (396 aa).

The residue at position 88 (Lys88) is an N6-(pyridoxal phosphate)lysine.

Belongs to the TrpB family. Tetramer of two alpha and two beta chains. It depends on pyridoxal 5'-phosphate as a cofactor.

It catalyses the reaction (1S,2R)-1-C-(indol-3-yl)glycerol 3-phosphate + L-serine = D-glyceraldehyde 3-phosphate + L-tryptophan + H2O. The protein operates within amino-acid biosynthesis; L-tryptophan biosynthesis; L-tryptophan from chorismate: step 5/5. Its function is as follows. The beta subunit is responsible for the synthesis of L-tryptophan from indole and L-serine. In Shewanella sp. (strain ANA-3), this protein is Tryptophan synthase beta chain.